We begin with the raw amino-acid sequence, 206 residues long: FMN-dependent NADH:quinone oxidoreductase (206 aa).

Residues serine 9, 15–17 (SVS), and 139–142 (SRGG) each bind FMN.

Belongs to the azoreductase type 1 family. As to quaternary structure, homodimer. It depends on FMN as a cofactor.

The enzyme catalyses 2 a quinone + NADH + H(+) = 2 a 1,4-benzosemiquinone + NAD(+). It catalyses the reaction N,N-dimethyl-1,4-phenylenediamine + anthranilate + 2 NAD(+) = 2-(4-dimethylaminophenyl)diazenylbenzoate + 2 NADH + 2 H(+). Its function is as follows. Quinone reductase that provides resistance to thiol-specific stress caused by electrophilic quinones. Functionally, also exhibits azoreductase activity. Catalyzes the reductive cleavage of the azo bond in aromatic azo compounds to the corresponding amines. In Cupriavidus necator (strain ATCC 17699 / DSM 428 / KCTC 22496 / NCIMB 10442 / H16 / Stanier 337) (Ralstonia eutropha), this protein is FMN-dependent NADH:quinone oxidoreductase.